Consider the following 63-residue polypeptide: Conotoxin TeAr193 (63 aa).

The N-terminal stretch at 1 to 22 (MRCLPVFVILLLLIASAPSVDA) is a signal peptide. A propeptide spanning residues 23–48 (QPKTKDDIPQASFLDNAKRYLQVLES) is cleaved from the precursor.

Belongs to the conotoxin T superfamily. In terms of processing, contains 2 disulfide bonds that can be either 'C1-C3, C2-C4' or 'C1-C4, C2-C3', since these disulfide connectivities have been observed for conotoxins with cysteine framework V (for examples, see AC P0DQQ7 and AC P81755). Expressed by the venom duct.

Its subcellular location is the secreted. This Conus textile (Cloth-of-gold cone) protein is Conotoxin TeAr193.